A 208-amino-acid chain; its full sequence is Thymidylate kinase (208 aa).

An ATP-binding site is contributed by 10–17; sequence GLEGAGKS.

Belongs to the thymidylate kinase family.

The catalysed reaction is dTMP + ATP = dTDP + ADP. Phosphorylation of dTMP to form dTDP in both de novo and salvage pathways of dTTP synthesis. The sequence is that of Thymidylate kinase from Glaesserella parasuis serovar 5 (strain SH0165) (Haemophilus parasuis).